The following is a 339-amino-acid chain: MSTVHEILCKLSLEGDHSTPPSAYGSVKAYTNFDAERDALNIETAIKTKGVDEVTIVNILTNRSNEQRQDIAFAYQRRTKKELASALKSALSGHLETVILGLLKTPAQYDASELKASMKGLGTDEDSLIEIICSRTNQELQEINRVYKEMYKTDLEKDIVSDTSGDFRKLMVALAKGRRAEDGSVIDYELIDQDARDLYDAGVKXKXTDVPKWISIMTERSVCHLQKVFERYKSYSPYDMLESIKKEVKGDLENAFLNLVQCIQNKPLYFADRLYDSMKGKGTRDKVLIRIMVSRSEVDMLKIRSEFKKKYGKSLYYYIQQDTKGDYQKALLYLCGGDD.

An N-acetylserine modification is found at serine 2. Residues 2–24 (STVHEILCKLSLEGDHSTPPSAY) form an S100A10-binding site region. The residue at position 24 (tyrosine 24) is a Phosphotyrosine; by SRC. Serine 26 bears the Phosphoserine; by PKC mark. Annexin repeat units lie at residues 33-104 (FDAE…GLLK) and 105-176 (TPAQ…ALAK). Position 49 is an N6-acetyllysine; alternate (lysine 49). Lysine 49 is covalently cross-linked (Glycyl lysine isopeptide (Lys-Gly) (interchain with G-Cter in SUMO1); alternate). Residue lysine 49 forms a Glycyl lysine isopeptide (Lys-Gly) (interchain with G-Cter in SUMO2); alternate linkage. Lysine 152 carries the post-translational modification N6-acetyllysine. Serine 184 bears the Phosphoserine mark. Annexin repeat units lie at residues 189 to 261 (ELID…NLVQ) and 265 to 336 (NKPL…YLCG). Tyrosine 199 bears the Phosphotyrosine mark. Lysine 227 bears the N6-acetyllysine mark.

Belongs to the annexin family. Heterotetramer containing 2 light chains of S100A10/p11 and 2 heavy chains of ANXA2/p36. Interacts with ATP1B1. Interacts with DYSF. Interacts with COCH. Interacts (via repeat Annexin 1) with PCSK9 (via the C-terminal domain); the interaction inhibits the degradation of LDLR. Interacts with CEACAM1 (via the cytoplasmic domain); this interaction is regulated by phosphorylation of CEACAM1. Interacts with APPL2 and APPL1; targets APPL2 to endosomes and acting in parallel to RAB5A. Interacts with S100A4. May interact with UBAP2. In terms of processing, ISGylated. Expressed strongly in velvet antler reserve mesenchyme.

It localises to the secreted. Its subcellular location is the extracellular space. The protein resides in the extracellular matrix. It is found in the basement membrane. Calcium-regulated membrane-binding protein whose affinity for calcium is greatly enhanced by anionic phospholipids. It binds two calcium ions with high affinity. May be involved in heat-stress response. Inhibits PCSK9-enhanced LDLR degradation, probably reduces PCSK9 protein levels via a translational mechanism but also competes with LDLR for binding with PCSK9. Binds to endosomes damaged by phagocytosis of particulate wear debris and participates in endosomal membrane stabilization, thereby limiting NLRP3 inflammasome activation. Required for endothelial cell surface plasmin generation and may support fibrinolytic surveillance and neoangiogenesis. This is Annexin A2 (ANXA2) from Cervus elaphus (Red deer).